The sequence spans 510 residues: Maturase K (510 aa).

This sequence belongs to the intron maturase 2 family. MatK subfamily.

The protein resides in the plastid. Its subcellular location is the chloroplast. Functionally, usually encoded in the trnK tRNA gene intron. Probably assists in splicing its own and other chloroplast group II introns. This is Maturase K from Cestrum elegans (Red cestrum).